Consider the following 274-residue polypeptide: 4-deoxy-L-threo-5-hexosulose-uronate ketol-isomerase (274 aa).

H192, H194, E199, and H241 together coordinate Zn(2+).

Belongs to the KduI family. Zn(2+) is required as a cofactor.

It catalyses the reaction 5-dehydro-4-deoxy-D-glucuronate = 3-deoxy-D-glycero-2,5-hexodiulosonate. It functions in the pathway glycan metabolism; pectin degradation; 2-dehydro-3-deoxy-D-gluconate from pectin: step 4/5. Catalyzes the isomerization of 5-dehydro-4-deoxy-D-glucuronate to 3-deoxy-D-glycero-2,5-hexodiulosonate. The protein is 4-deoxy-L-threo-5-hexosulose-uronate ketol-isomerase of Agrobacterium fabrum (strain C58 / ATCC 33970) (Agrobacterium tumefaciens (strain C58)).